The chain runs to 350 residues: 2-oxoglutarate-dependent ethylene/succinate-forming enzyme (350 aa).

Positions 166-286 (GWHHMRVLRF…RFACAYFHEP (121 aa)) constitute a Fe2OG dioxygenase domain. Residues H189 and H268 each coordinate Fe cation.

The protein belongs to the iron/ascorbate-dependent oxidoreductase family. Monomer. Fe(2+) serves as cofactor.

The enzyme catalyses 2-oxoglutarate + O2 + 2 H(+) = ethene + 3 CO2 + H2O. It carries out the reaction L-arginine + 2-oxoglutarate + O2 = guanidine + L-glutamate 5-semialdehyde + succinate + CO2. It functions in the pathway alkene biosynthesis; ethylene biosynthesis via 2-oxoglutarate. Activated by catalase. Inhibited by chelating reagents such as EDTA and Tiron (4,5-dihydroxy-1,3-benzene disulphonic acid), and by DTNB (5,5'-dithio-bis-2-nitrobenzoate) and hydrogen peroxide. Its function is as follows. Simultaneously catalyzes two reactions, namely formation of ethylene and of succinate from 2-oxoglutarate, with a molar ratio of 2:1. This Pseudomonas savastanoi pv. phaseolicola (Pseudomonas syringae pv. phaseolicola) protein is 2-oxoglutarate-dependent ethylene/succinate-forming enzyme (efe).